The chain runs to 100 residues: Aspartyl/glutamyl-tRNA(Asn/Gln) amidotransferase subunit C (100 aa).

It belongs to the GatC family. As to quaternary structure, heterotrimer of A, B and C subunits.

The enzyme catalyses L-glutamyl-tRNA(Gln) + L-glutamine + ATP + H2O = L-glutaminyl-tRNA(Gln) + L-glutamate + ADP + phosphate + H(+). The catalysed reaction is L-aspartyl-tRNA(Asn) + L-glutamine + ATP + H2O = L-asparaginyl-tRNA(Asn) + L-glutamate + ADP + phosphate + 2 H(+). Its function is as follows. Allows the formation of correctly charged Asn-tRNA(Asn) or Gln-tRNA(Gln) through the transamidation of misacylated Asp-tRNA(Asn) or Glu-tRNA(Gln) in organisms which lack either or both of asparaginyl-tRNA or glutaminyl-tRNA synthetases. The reaction takes place in the presence of glutamine and ATP through an activated phospho-Asp-tRNA(Asn) or phospho-Glu-tRNA(Gln). This chain is Aspartyl/glutamyl-tRNA(Asn/Gln) amidotransferase subunit C, found in Streptococcus pneumoniae (strain Taiwan19F-14).